The sequence spans 356 residues: S-adenosylmethionine:tRNA ribosyltransferase-isomerase (356 aa).

Belongs to the QueA family. Monomer.

The protein resides in the cytoplasm. The catalysed reaction is 7-aminomethyl-7-carbaguanosine(34) in tRNA + S-adenosyl-L-methionine = epoxyqueuosine(34) in tRNA + adenine + L-methionine + 2 H(+). It participates in tRNA modification; tRNA-queuosine biosynthesis. Functionally, transfers and isomerizes the ribose moiety from AdoMet to the 7-aminomethyl group of 7-deazaguanine (preQ1-tRNA) to give epoxyqueuosine (oQ-tRNA). This Xanthomonas euvesicatoria pv. vesicatoria (strain 85-10) (Xanthomonas campestris pv. vesicatoria) protein is S-adenosylmethionine:tRNA ribosyltransferase-isomerase.